Here is a 258-residue protein sequence, read N- to C-terminus: uncharacterized protein (258 aa).

The N-terminal stretch at 1–20 (MKCFQKLYIFILILIVLMAG) is a signal peptide. The N-palmitoyl cysteine moiety is linked to residue Cys21. A lipid anchor (S-diacylglycerol cysteine) is attached at Cys21.

The protein belongs to the staphylococcal tandem lipoprotein family.

It localises to the cell membrane. This is an uncharacterized protein from Staphylococcus aureus (strain bovine RF122 / ET3-1).